A 446-amino-acid polypeptide reads, in one-letter code: Signal recognition particle 54 kDa protein (446 aa).

GTP is bound by residues 104–111, 184–188, and 242–245; these read GLQGSGKT, DTAGR, and TKMD.

It belongs to the GTP-binding SRP family. SRP54 subfamily. Part of the signal recognition particle protein translocation system, which is composed of SRP and FtsY. Archaeal SRP consists of a 7S RNA molecule of 300 nucleotides and two protein subunits: SRP54 and SRP19.

Its subcellular location is the cytoplasm. The catalysed reaction is GTP + H2O = GDP + phosphate + H(+). In terms of biological role, involved in targeting and insertion of nascent membrane proteins into the cytoplasmic membrane. Binds to the hydrophobic signal sequence of the ribosome-nascent chain (RNC) as it emerges from the ribosomes. The SRP-RNC complex is then targeted to the cytoplasmic membrane where it interacts with the SRP receptor FtsY. This chain is Signal recognition particle 54 kDa protein, found in Methanocorpusculum labreanum (strain ATCC 43576 / DSM 4855 / Z).